The sequence spans 572 residues: DNA mismatch repair protein MutL (572 aa).

Belongs to the DNA mismatch repair MutL/HexB family.

Functionally, this protein is involved in the repair of mismatches in DNA. It is required for dam-dependent methyl-directed DNA mismatch repair. May act as a 'molecular matchmaker', a protein that promotes the formation of a stable complex between two or more DNA-binding proteins in an ATP-dependent manner without itself being part of a final effector complex. The polypeptide is DNA mismatch repair protein MutL (Dictyoglomus turgidum (strain DSM 6724 / Z-1310)).